We begin with the raw amino-acid sequence, 515 residues long: Ribonuclease Y (515 aa).

The helical transmembrane segment at 6–26 (LTSFVIITLSLAVGLTGGYYG) threads the bilayer. The 86-residue stretch at 205–290 (TVSVVPLPND…EMVEKARKEI (86 aa)) folds into the KH domain. An HD domain is found at 331–424 (VLRHSVEVAH…VQAADAISAS (94 aa)).

This sequence belongs to the RNase Y family.

The protein resides in the cell membrane. Endoribonuclease that initiates mRNA decay. This is Ribonuclease Y from Syntrophomonas wolfei subsp. wolfei (strain DSM 2245B / Goettingen).